A 366-amino-acid polypeptide reads, in one-letter code: MGKIDFRLEKTFGYTTGACAAAGAYSALYFLKNNERLNFVEIVNLKEDSLIIPIKNIEKQGDTAISTVEKFSGEDIDITNGMDIEIEVTLNLDNNSSESSNVDIIGGIGVGIITKSGLQVTLGKPAINPKPREMIETNLKSLLTDNECVTVKISVPNGDEIAKKTLNPKLGIIGGISILGTTGIVRPMSNDAYKESLAPQIDVALANNFENLIFVPGNIGTKHAKILLHAEEDQIIEVSNFWDYMLNKAKEKGVKDITVFGHAGKIVKLAGGIFDTHSKVADARNEILCAYTSLVTQDVEILQKILQSNTTEDIVEILTEKGILKEVFDNVSKRVVERLSSRWDGINFSCIIINMKGNMLGKYDQG.

Belongs to the CbiD family.

It carries out the reaction Co-precorrin-5B + S-adenosyl-L-methionine = Co-precorrin-6A + S-adenosyl-L-homocysteine. Its pathway is cofactor biosynthesis; adenosylcobalamin biosynthesis; cob(II)yrinate a,c-diamide from sirohydrochlorin (anaerobic route): step 6/10. Catalyzes the methylation of C-1 in cobalt-precorrin-5B to form cobalt-precorrin-6A. This Methanococcus maripaludis (strain C7 / ATCC BAA-1331) protein is Cobalt-precorrin-5B C(1)-methyltransferase.